Reading from the N-terminus, the 128-residue chain is Azurin (128 aa).

Residues 1 to 128 (AECKVDVDST…SMMKGAVVLK (128 aa)) enclose the Plastocyanin-like domain. The cysteines at positions 3 and 26 are disulfide-linked. Residues His-46, Cys-112, His-117, and Met-121 each coordinate Cu cation.

Its subcellular location is the periplasm. Its function is as follows. Transfers electrons from cytochrome c551 to cytochrome oxidase. This chain is Azurin, found in Pseudomonas chlororaphis (Pseudomonas aureofaciens).